The following is a 297-amino-acid chain: uncharacterized protein (297 aa).

7 WD repeats span residues 12–51, 54–93, 96–135, 140–177, 179–217, 222–261, and 265–297; these read KAKE…CIHE, GHGH…VDRR, GHLA…FSPI, DAKD…LSSD, FSHP…ILKS, KNME…QITS, and VGTP…YQYN.

This sequence belongs to the WD repeat MORG1 family.

The protein resides in the cytoplasm. The protein localises to the nucleus. This is an uncharacterized protein from Schizosaccharomyces pombe (strain 972 / ATCC 24843) (Fission yeast).